The chain runs to 191 residues: Small ribosomal subunit protein uS11m (191 aa).

Residues Pro-37–Pro-62 form a disordered region. Positions Arg-38–Ala-53 are enriched in basic and acidic residues.

Belongs to the universal ribosomal protein uS11 family. Component of the mitochondrial ribosome small subunit (28S) which comprises a 12S rRNA and about 30 distinct proteins.

The protein localises to the mitochondrion. This chain is Small ribosomal subunit protein uS11m (Mrps11), found in Mus musculus (Mouse).